Here is a 444-residue protein sequence, read N- to C-terminus: Tubulin beta chain (444 aa).

Residues glutamine 11, glutamate 68, serine 137, glycine 141, threonine 142, glycine 143, asparagine 203, and asparagine 225 each coordinate GTP. Residue glutamate 68 participates in Mg(2+) binding. Residues 424-444 are disordered; that stretch reads QDATAEEEGEFDEDEEMDEMM. Residues 427 to 444 show a composition bias toward acidic residues; that stretch reads TAEEEGEFDEDEEMDEMM.

Belongs to the tubulin family. Dimer of alpha and beta chains. A typical microtubule is a hollow water-filled tube with an outer diameter of 25 nm and an inner diameter of 15 nM. Alpha-beta heterodimers associate head-to-tail to form protofilaments running lengthwise along the microtubule wall with the beta-tubulin subunit facing the microtubule plus end conferring a structural polarity. Microtubules usually have 13 protofilaments but different protofilament numbers can be found in some organisms and specialized cells. Mg(2+) is required as a cofactor.

It is found in the cytoplasm. It localises to the cytoskeleton. Functionally, tubulin is the major constituent of microtubules, a cylinder consisting of laterally associated linear protofilaments composed of alpha- and beta-tubulin heterodimers. Microtubules grow by the addition of GTP-tubulin dimers to the microtubule end, where a stabilizing cap forms. Below the cap, tubulin dimers are in GDP-bound state, owing to GTPase activity of alpha-tubulin. In Achlya klebsiana, this protein is Tubulin beta chain.